The chain runs to 744 residues: MNSNIEDDPWSSGWNDDNDNNNNNNTSINDPLTGATATTTPYQSSYLTSSQLFTSTGGGGSGSGGGYNSGVNTYNTTIPPNLINVPSSYETIYSHFITKYNNNNNNNNSNSTFTLNDFEINIIDKLISLNYLTNYQKQKILDIIYENNLLPINQSFKFYQILGLLALEIDVPGTGDYVTLQFRLNNNLPDLPEKFINEIINEENEQEEQTSGLLGNRNRSIQSHSHFGPNNQDDWNIDDSTTISGGGGGGGGNFGDPLLVDHSYIHDDLIDESRSVGGTQPQQGGGGGSGGGSGSGSGTIAPNVDSSYIEKYINDIKDQFKPLFSGIDLIKIKEVPEKEGIIFKHINYMITHDLKIGGTSSGTKKVIRRYSDFVWLMEYLLEKYPFRVIPGLPPKKFTGASPDSQFLQRRRRGLHRFLNQLIKHPILSQEPIVQSFLTVPTDLTTWKKQAKIDSSLEFKGQKIQTDFINVIWPIMGEPFLKKWRQAEENIQFIIDKWVKIIILVERYERRQQQISFDNGKFAEMLNGFSKLNTKIYPDNEDNNNSTRNDVNVNVVVVDNNENYKQDFDFNSSGDIININQCLNSIGEFFNKSSQVLIDESYIINTKTLEKFKNYLDYLNSLQELFERTKQLSINQIDLLDKRIKDQEIKFKKISEENPDIKGGELIKLRQSIINDKQEIFQQLNKDWLIKQCCLQEFIIFQETQFLITELWVEWCKDRLKCQEKLVGLYDNLNQEIIHDMPLER.

Disordered stretches follow at residues Met-1–Thr-40, Asn-218–Gly-252, and Ser-273–Thr-299. 2 stretches are compositionally biased toward polar residues: residues Thr-26–Thr-40 and Asn-218–Ile-243. The segment covering Gln-283–Ser-297 has biased composition (gly residues). A PX domain is found at Gly-326–Thr-444. Arg-369, Ser-371, Lys-395, and Arg-410 together coordinate a 1,2-diacyl-sn-glycero-3-phospho-(1D-myo-inositol-3-phosphate).

Belongs to the sorting nexin family.

Its subcellular location is the cytoplasm. It is found in the membrane. Its function is as follows. Required for vacuolar protein sorting. The protein is Sorting nexin MVP1 (MVP1) of Candida albicans (strain SC5314 / ATCC MYA-2876) (Yeast).